The sequence spans 596 residues: Aspartate--tRNA(Asp/Asn) ligase (596 aa).

E175 serves as a coordination point for L-aspartate. Positions 199–202 are aspartate; it reads QQYK. L-aspartate contacts are provided by R221 and H454. 221–223 serves as a coordination point for ATP; the sequence is RDE. Residue E488 coordinates ATP. R495 is an L-aspartate binding site. Residue 540-543 participates in ATP binding; that stretch reads GVDR.

Belongs to the class-II aminoacyl-tRNA synthetase family. Type 1 subfamily. In terms of assembly, homodimer.

The protein resides in the cytoplasm. The catalysed reaction is tRNA(Asx) + L-aspartate + ATP = L-aspartyl-tRNA(Asx) + AMP + diphosphate. Functionally, aspartyl-tRNA synthetase with relaxed tRNA specificity since it is able to aspartylate not only its cognate tRNA(Asp) but also tRNA(Asn). Reaction proceeds in two steps: L-aspartate is first activated by ATP to form Asp-AMP and then transferred to the acceptor end of tRNA(Asp/Asn). The chain is Aspartate--tRNA(Asp/Asn) ligase from Bartonella henselae (strain ATCC 49882 / DSM 28221 / CCUG 30454 / Houston 1) (Rochalimaea henselae).